The following is a 423-amino-acid chain: F-box/LRR-repeat protein 2 (423 aa).

One can recognise an F-box domain in the interval 9–55 (GLINKKLPKELLLRIFSFLDIVTLCRCAQISKAWNILALDGSNWQRI). LRR repeat units follow at residues 61–87 (QTDVEGRVVENISKRCGGFLRKLSLRG), 88–113 (CIGVGDSSLKTFAQNCRNIEHLNLNG), 114–139 (CTKITDSTCYSLSRFCSKLKHLDLTS), 140–165 (CVSITNSSLKGISEGCRHLEYLNLSW), 166–191 (CDQITKDGVEALVRGCRGLRALLLRG), 192–217 (CTQLEDEALKHIQNYCHELVSLNLQS), 218–243 (CSRVTDDGVVQLCRGCPRLQALCLSG), 244–269 (CGSLTDASLTALALNCPRLQILEAAR), 270–295 (CSHLTDAGFTLLARNCHDLEKMDLEE), 296–321 (CILITDRTLTQLSIHCPKLQALSLSH), 322–350 (CELITDDGILHLSNSPCGHERLRVLELDN), 351–375 (CLLITDVALEHLEHCRGLERLELYD), and 376–401 (CQQVTRAGIKRMRAQLPHVRVHAYFA). The segment at 80-90 (LRKLSLRGCIG) is interaction with Calmodulin. Lys201 participates in a covalent cross-link: Glycyl lysine isopeptide (Lys-Gly) (interchain with G-Cter in ubiquitin). At Thr404 the chain carries Phosphothreonine. Cys420 carries S-geranylgeranyl cysteine lipidation. The CAAX motif signature appears at 420 to 423 (CVIL).

Part of the SCF (SKP1-CUL1-F-box) E3 ubiquitin-protein ligase complex SCF(FBXL2) composed of CUL1, SKP1, RBX1 and FBXL2. Interacts with calmodulin; may antagonize substrate ubiquitination by SCF(FBXL2). May interact with PIK3R1. Interacts with PTPN13. Phosphorylated by GSK-beta (GSK3B), promoting recognition by FBXO3, leading to its ubiquitination by the SCF(FBXO3) complex. Post-translationally, ubiquitinated at Lys-201 by the SCF(FBXO3) complex in response to lipopolysaccharide (LPS), leading to its degradation by the proteasome.

The protein resides in the membrane. The protein operates within protein modification; protein ubiquitination. Its function is as follows. Calcium-activated substrate recognition component of the SCF (SKP1-cullin-F-box protein) E3 ubiquitin-protein ligase complex, SCF(FBXL2), which mediates the ubiquitination and subsequent proteasomal degradation of target proteins. Unlike many F-box proteins, FBXL2 does not seem to target phosphodegron within its substrates but rather calmodulin-binding motifs and is thereby antagonized by calmodulin. This is the case for the cyclins CCND2 and CCND3 which polyubiquitination and subsequent degradation are inhibited by calmodulin. Through CCND2 and CCND3 degradation induces cell-cycle arrest in G(0). SCF(FBXL2) also mediates PIK3R2 ubiquitination and proteasomal degradation thereby regulating phosphatidylinositol 3-kinase signaling and autophagy. PCYT1A monoubiquitination by SCF(FBXL2) and subsequent degradation regulates synthesis of phosphatidylcholine, which is utilized for formation of membranes and of pulmonary surfactant. The SCF(FBXL2) complex acts as a regulator of inflammation by mediating ubiquitination and degradation of TRAF proteins (TRAF1, TRAF2, TRAF3, TRAF4, TRAF5 and TRAF6). The SCF(FBXL2) complex acts as a negative regulator of the NLRP3 inflammasome by mediating ubiquitination and degradation of NLRP3. In Bos taurus (Bovine), this protein is F-box/LRR-repeat protein 2.